Here is a 337-residue protein sequence, read N- to C-terminus: Methylthioribose-1-phosphate isomerase (337 aa).

Substrate contacts are provided by residues 47–49, R81, and Q184; that span reads RGA. D225 serves as the catalytic Proton donor. A substrate-binding site is contributed by 235–236; the sequence is NK.

It belongs to the eIF-2B alpha/beta/delta subunits family. MtnA subfamily.

It carries out the reaction 5-(methylsulfanyl)-alpha-D-ribose 1-phosphate = 5-(methylsulfanyl)-D-ribulose 1-phosphate. The protein operates within amino-acid biosynthesis; L-methionine biosynthesis via salvage pathway; L-methionine from S-methyl-5-thio-alpha-D-ribose 1-phosphate: step 1/6. Its function is as follows. Catalyzes the interconversion of methylthioribose-1-phosphate (MTR-1-P) into methylthioribulose-1-phosphate (MTRu-1-P). This Parasynechococcus marenigrum (strain WH8102) protein is Methylthioribose-1-phosphate isomerase.